The sequence spans 493 residues: Glutamyl-tRNA(Gln) amidotransferase subunit A (493 aa).

Residues K78 and S158 each act as charge relay system in the active site. S182 functions as the Acyl-ester intermediate in the catalytic mechanism.

The protein belongs to the amidase family. GatA subfamily. In terms of assembly, heterotrimer of A, B and C subunits.

The catalysed reaction is L-glutamyl-tRNA(Gln) + L-glutamine + ATP + H2O = L-glutaminyl-tRNA(Gln) + L-glutamate + ADP + phosphate + H(+). Its function is as follows. Allows the formation of correctly charged Gln-tRNA(Gln) through the transamidation of misacylated Glu-tRNA(Gln) in organisms which lack glutaminyl-tRNA synthetase. The reaction takes place in the presence of glutamine and ATP through an activated gamma-phospho-Glu-tRNA(Gln). In Rickettsia bellii (strain OSU 85-389), this protein is Glutamyl-tRNA(Gln) amidotransferase subunit A.